The sequence spans 411 residues: Glutamate dehydrogenase (411 aa).

Lysine 102 is an active-site residue.

Belongs to the Glu/Leu/Phe/Val dehydrogenases family.

It catalyses the reaction L-glutamate + NAD(+) + H2O = 2-oxoglutarate + NH4(+) + NADH + H(+). The catalysed reaction is L-glutamate + NADP(+) + H2O = 2-oxoglutarate + NH4(+) + NADPH + H(+). In Zea mays (Maize), this protein is Glutamate dehydrogenase (GDH1).